The primary structure comprises 155 residues: Transcriptional repressor NrdR (155 aa).

A zinc finger lies at 3–34 (CPYCQNADTRVVDSRLIGEGEQVRRRRQCPSC). Residues 49 to 139 (PRVVKSDGRR…VYRRFEDVGA (91 aa)) form the ATP-cone domain.

This sequence belongs to the NrdR family. Zn(2+) serves as cofactor.

Negatively regulates transcription of bacterial ribonucleotide reductase nrd genes and operons by binding to NrdR-boxes. The protein is Transcriptional repressor NrdR of Halorhodospira halophila (strain DSM 244 / SL1) (Ectothiorhodospira halophila (strain DSM 244 / SL1)).